The primary structure comprises 1168 residues: Probable serine/threonine protein kinase IRE (1168 aa).

Disordered regions lie at residues 1–165 (MSTT…GVES) and 377–444 (EKQN…KIQP). The span at 16-25 (PTTISTPTST) shows a compositional bias: low complexity. Basic and acidic residues-rich tracts occupy residues 39–54 (RHSD…KTDE) and 107–130 (QDDK…DARA). Composition is skewed to polar residues over residues 146 to 163 (QWSQ…NPGV) and 401 to 414 (TARS…NFRM). The segment at 488-507 (CRICEVEIPVVHVEEHSRIC) adopts a C2H2-type; atypical zinc-finger fold. Disordered regions lie at residues 546–566 (PRAV…DLDE), 602–622 (GTKD…PRNS), and 717–744 (SSNA…LNPR). The Protein kinase domain occupies 754-1043 (FEIIKPISRG…AGEVKQHHFF (290 aa)). Residues 760-768 (ISRGAFGRV) and Lys-783 each bind ATP. Asp-877 acts as the Proton acceptor in catalysis. In terms of domain architecture, AGC-kinase C-terminal spans 1044-1144 (KDINWDTLAR…KNLSQLASIN (101 aa)).

Belongs to the protein kinase superfamily. AGC Ser/Thr protein kinase family. Highly expressed in roots, elongating root hair cells and pollen grains.

The catalysed reaction is L-seryl-[protein] + ATP = O-phospho-L-seryl-[protein] + ADP + H(+). It catalyses the reaction L-threonyl-[protein] + ATP = O-phospho-L-threonyl-[protein] + ADP + H(+). In terms of biological role, modulates root tip growth. May play a common role in the tip growth of plant cells. The polypeptide is Probable serine/threonine protein kinase IRE (Arabidopsis thaliana (Mouse-ear cress)).